The chain runs to 177 residues: Small ribosomal subunit protein uS5 (177 aa).

Residues 21-84 (LKEKMISVNR…DEARRGMIKI (64 aa)) enclose the S5 DRBM domain.

It belongs to the universal ribosomal protein uS5 family. Part of the 30S ribosomal subunit. Contacts proteins S4 and S8.

In terms of biological role, with S4 and S12 plays an important role in translational accuracy. Its function is as follows. Located at the back of the 30S subunit body where it stabilizes the conformation of the head with respect to the body. This Nitrosomonas eutropha (strain DSM 101675 / C91 / Nm57) protein is Small ribosomal subunit protein uS5.